Consider the following 307-residue polypeptide: Taste receptor type 2 member 41 (307 aa).

The Extracellular segment spans residues 1-7; the sequence is MQAALTA. A helical membrane pass occupies residues 8–28; it reads FFMLLFSLLSLLGIAANGFIV. Over 29–40 the chain is Cytoplasmic; sequence LVLGREWLRYGR. A helical membrane pass occupies residues 41–61; sequence LLPLDMILISLGASRFCLQLV. Residues 62–88 are Extracellular-facing; sequence GTVHNFYYSAQKVEYSGGLGRQFFHLH. The chain crosses the membrane as a helical span at residues 89–109; it reads WHFLNSATFWFCSWLSVLFCV. Residues 110–129 lie on the Cytoplasmic side of the membrane; it reads KIANITHPTFLWLKWRFPGW. The helical transmembrane segment at 130–150 threads the bilayer; it reads VPWLLLGSVLISFIITLLFFW. Residues 151–183 lie on the Extracellular side of the membrane; that stretch reads VNYPAYQEFLIRKFSVNMTYKWNTRIETYYFPS. N167 is a glycosylation site (N-linked (GlcNAc...) asparagine). The chain crosses the membrane as a helical span at residues 184-204; it reads LKLVIWSIPFSVFLVSIMLLI. Residues 205–234 are Cytoplasmic-facing; sequence NSLRRHTQRMQHNGHSLQDPSTQAHTRALK. The chain crosses the membrane as a helical span at residues 235–255; that stretch reads SLISFLILYALSFLSLIIDAT. The Extracellular segment spans residues 256 to 264; that stretch reads KFISMQNDF. Residues 265 to 285 traverse the membrane as a helical segment; it reads YWPWQIAVYLCISVHPFILIF. Residues 286 to 307 are Cytoplasmic-facing; sequence SNLKLRSVFSQLLLLARGFWVA.

Belongs to the G-protein coupled receptor T2R family.

The protein localises to the membrane. Functionally, receptor that may play a role in the perception of bitterness and is gustducin-linked. May play a role in sensing the chemical composition of the gastrointestinal content. The activity of this receptor may stimulate alpha gustducin, mediate PLC-beta-2 activation and lead to the gating of TRPM5. In Pan troglodytes (Chimpanzee), this protein is Taste receptor type 2 member 41 (TAS2R41).